The primary structure comprises 179 residues: Large ribosomal subunit protein uL5 (179 aa).

This sequence belongs to the universal ribosomal protein uL5 family. As to quaternary structure, part of the 50S ribosomal subunit; part of the 5S rRNA/L5/L18/L25 subcomplex. Contacts the 5S rRNA and the P site tRNA. Forms a bridge to the 30S subunit in the 70S ribosome.

Its function is as follows. This is one of the proteins that bind and probably mediate the attachment of the 5S RNA into the large ribosomal subunit, where it forms part of the central protuberance. In the 70S ribosome it contacts protein S13 of the 30S subunit (bridge B1b), connecting the 2 subunits; this bridge is implicated in subunit movement. Contacts the P site tRNA; the 5S rRNA and some of its associated proteins might help stabilize positioning of ribosome-bound tRNAs. The chain is Large ribosomal subunit protein uL5 from Prochlorococcus marinus (strain AS9601).